The following is an 81-amino-acid chain: Sulfur carrier protein TusA (81 aa).

The active-site Cysteine persulfide intermediate is the cysteine 19.

The protein belongs to the sulfur carrier protein TusA family. As to quaternary structure, interacts with IscS.

It localises to the cytoplasm. Its pathway is tRNA modification. Sulfur carrier protein involved in sulfur trafficking in the cell. Part of a sulfur-relay system required for 2-thiolation during synthesis of 2-thiouridine of the modified wobble base 5-methylaminomethyl-2-thiouridine (mnm(5)s(2)U) in tRNA. Interacts with IscS and stimulates its cysteine desulfurase activity. Accepts an activated sulfur from IscS, which is then transferred to TusD, and thus determines the direction of sulfur flow from IscS to 2-thiouridine formation. Also appears to be involved in sulfur transfer for the biosynthesis of molybdopterin. This is Sulfur carrier protein TusA from Shigella boydii serotype 18 (strain CDC 3083-94 / BS512).